A 67-amino-acid chain; its full sequence is Spiniferin (67 aa).

The N-terminal stretch at 1 to 23 (MKTQLAILLITLVLFQMFSQSDA) is a signal peptide. Leu-36 is subject to Leucine amide. The propeptide occupies 40–67 (GLNDLSDLDELFDGEISKADLDFLREIM).

The protein belongs to the non-disulfide-bridged peptide (NDBP) superfamily. Short antimicrobial peptide (group 4) family. Expressed by the venom gland.

It is found in the secreted. The protein resides in the target cell membrane. Functionally, alpha-helical and amphipathic peptide with weak antimicrobial activities against both Gram-positive (MIC=41 uM to &gt;82 uM) and Gram-negative (MIC&gt;82 uM) bacteria. It has extremely weak hemolytic activity against human erythrocytes. The sequence is that of Spiniferin from Heterometrus spinifer (Asia giant forest scorpion).